The following is a 320-amino-acid chain: Serpentine receptor class gamma-17 (320 aa).

The next 6 helical transmembrane spans lie at 25–45 (AIYFVTACYLSVGLFCHISLL), 80–100 (IFFGRIFMYIPQLCPFVSTFF), 155–175 (FIMLILPFAGLWNIMISQVIA), 192–212 (WASLSLFQSICILTALGFTIV), 237–257 (FTSISISCTFLLVAGTQLTFA), and 268–288 (YILQFLAFDTFNVGSAIIMFL).

This sequence belongs to the nematode receptor-like protein srg family.

The protein localises to the membrane. This is Serpentine receptor class gamma-17 (srg-17) from Caenorhabditis elegans.